Here is a 97-residue protein sequence, read N- to C-terminus: Co-chaperonin GroES (97 aa).

This sequence belongs to the GroES chaperonin family. Heptamer of 7 subunits arranged in a ring. Interacts with the chaperonin GroEL.

The protein resides in the cytoplasm. Functionally, together with the chaperonin GroEL, plays an essential role in assisting protein folding. The GroEL-GroES system forms a nano-cage that allows encapsulation of the non-native substrate proteins and provides a physical environment optimized to promote and accelerate protein folding. GroES binds to the apical surface of the GroEL ring, thereby capping the opening of the GroEL channel. The sequence is that of Co-chaperonin GroES from Erwinia tasmaniensis (strain DSM 17950 / CFBP 7177 / CIP 109463 / NCPPB 4357 / Et1/99).